Here is a 338-residue protein sequence, read N- to C-terminus: Lipoate-protein ligase A (338 aa).

In terms of domain architecture, BPL/LPL catalytic spans 29–216; sequence PATQRVLFLW…AFFAHYGERV (188 aa). Residues Arg71, 76 to 79, and Lys134 contribute to the ATP site; that span reads GAVF. Lys134 contacts (R)-lipoate.

This sequence belongs to the LplA family. Monomer.

It is found in the cytoplasm. The enzyme catalyses L-lysyl-[lipoyl-carrier protein] + (R)-lipoate + ATP = N(6)-[(R)-lipoyl]-L-lysyl-[lipoyl-carrier protein] + AMP + diphosphate + H(+). The protein operates within protein modification; protein lipoylation via exogenous pathway; protein N(6)-(lipoyl)lysine from lipoate: step 1/2. It participates in protein modification; protein lipoylation via exogenous pathway; protein N(6)-(lipoyl)lysine from lipoate: step 2/2. Its function is as follows. Catalyzes both the ATP-dependent activation of exogenously supplied lipoate to lipoyl-AMP and the transfer of the activated lipoyl onto the lipoyl domains of lipoate-dependent enzymes. This chain is Lipoate-protein ligase A, found in Escherichia coli O8 (strain IAI1).